The sequence spans 502 residues: 4,4'-diapophytoene desaturase (4,4'-diaponeurosporene-forming) (502 aa).

An FAD-binding site is contributed by 5-17; sequence VIGAGVTGLAAAA.

Belongs to the carotenoid/retinoid oxidoreductase family. CrtN subfamily.

It carries out the reaction 15-cis-4,4'-diapophytoene + 3 FAD + 3 H(+) = all-trans-4,4'-diaponeurosporene + 3 FADH2. It participates in carotenoid biosynthesis; staphyloxanthin biosynthesis; staphyloxanthin from farnesyl diphosphate: step 2/5. Functionally, involved in the biosynthesis of the yellow-orange carotenoid staphyloxanthin, which plays a role in the virulence via its protective function against oxidative stress. Catalyzes three successive dehydrogenation reactions that lead to the introduction of three double bonds into 4,4'-diapophytoene (dehydrosqualene), with 4,4'-diapophytofluene and 4,4'-diapo-zeta-carotene as intermediates, and 4,4'-diaponeurosporene (the major deep-yellow pigment in staphylococci strains) as the end product. The chain is 4,4'-diapophytoene desaturase (4,4'-diaponeurosporene-forming) from Staphylococcus aureus (strain MRSA252).